A 60-amino-acid chain; its full sequence is Bacteriochlorophyll c-binding protein (60 aa).

Met1 is subject to N-formylmethionine. His25 contacts a bacteriochlorophyll c.

It belongs to the BChl C/E-binding protein family.

It localises to the chlorosome. It is found in the chlorosome envelope. Functionally, component of the photosynthetic apparatus. The light harvesting B740 complex binds bacteriochlorophyll c. The protein is Bacteriochlorophyll c-binding protein (csmA) of Pelodictyon luteolum.